Reading from the N-terminus, the 334-residue chain is CRISPR-associated endonuclease Cas1 (334 aa).

Residues E161, H226, and E241 each coordinate Mn(2+).

This sequence belongs to the CRISPR-associated endonuclease Cas1 family. Homodimer, forms a heterotetramer with a Cas2 homodimer. Mg(2+) serves as cofactor. Requires Mn(2+) as cofactor.

In terms of biological role, CRISPR (clustered regularly interspaced short palindromic repeat), is an adaptive immune system that provides protection against mobile genetic elements (viruses, transposable elements and conjugative plasmids). CRISPR clusters contain spacers, sequences complementary to antecedent mobile elements, and target invading nucleic acids. CRISPR clusters are transcribed and processed into CRISPR RNA (crRNA). Acts as a dsDNA endonuclease. Involved in the integration of spacer DNA into the CRISPR cassette. The protein is CRISPR-associated endonuclease Cas1 of Methanothermobacter thermautotrophicus (strain ATCC 29096 / DSM 1053 / JCM 10044 / NBRC 100330 / Delta H) (Methanobacterium thermoautotrophicum).